A 313-amino-acid polypeptide reads, in one-letter code: Ribose-phosphate pyrophosphokinase (313 aa).

Residues 37–39 (DGE) and 96–97 (RQ) each bind ATP. Positions 131 and 170 each coordinate Mg(2+). Lys193 is a catalytic residue. D-ribose 5-phosphate contacts are provided by residues Arg195, Asp219, and 223 to 227 (DTAGT).

Belongs to the ribose-phosphate pyrophosphokinase family. Class I subfamily. In terms of assembly, homohexamer. Mg(2+) serves as cofactor.

It is found in the cytoplasm. It catalyses the reaction D-ribose 5-phosphate + ATP = 5-phospho-alpha-D-ribose 1-diphosphate + AMP + H(+). It functions in the pathway metabolic intermediate biosynthesis; 5-phospho-alpha-D-ribose 1-diphosphate biosynthesis; 5-phospho-alpha-D-ribose 1-diphosphate from D-ribose 5-phosphate (route I): step 1/1. Its function is as follows. Involved in the biosynthesis of the central metabolite phospho-alpha-D-ribosyl-1-pyrophosphate (PRPP) via the transfer of pyrophosphoryl group from ATP to 1-hydroxyl of ribose-5-phosphate (Rib-5-P). This is Ribose-phosphate pyrophosphokinase from Pseudomonas putida (strain ATCC 47054 / DSM 6125 / CFBP 8728 / NCIMB 11950 / KT2440).